The sequence spans 157 residues: SsrA-binding protein (157 aa).

Belongs to the SmpB family.

Its subcellular location is the cytoplasm. In terms of biological role, required for rescue of stalled ribosomes mediated by trans-translation. Binds to transfer-messenger RNA (tmRNA), required for stable association of tmRNA with ribosomes. tmRNA and SmpB together mimic tRNA shape, replacing the anticodon stem-loop with SmpB. tmRNA is encoded by the ssrA gene; the 2 termini fold to resemble tRNA(Ala) and it encodes a 'tag peptide', a short internal open reading frame. During trans-translation Ala-aminoacylated tmRNA acts like a tRNA, entering the A-site of stalled ribosomes, displacing the stalled mRNA. The ribosome then switches to translate the ORF on the tmRNA; the nascent peptide is terminated with the 'tag peptide' encoded by the tmRNA and targeted for degradation. The ribosome is freed to recommence translation, which seems to be the essential function of trans-translation. The chain is SsrA-binding protein from Aquifex aeolicus (strain VF5).